The chain runs to 354 residues: Peptide chain release factor 1 (354 aa).

Gln230 carries the N5-methylglutamine modification.

Belongs to the prokaryotic/mitochondrial release factor family. In terms of processing, methylated by PrmC. Methylation increases the termination efficiency of RF1.

The protein localises to the cytoplasm. Functionally, peptide chain release factor 1 directs the termination of translation in response to the peptide chain termination codons UAG and UAA. In Rhodospirillum rubrum (strain ATCC 11170 / ATH 1.1.1 / DSM 467 / LMG 4362 / NCIMB 8255 / S1), this protein is Peptide chain release factor 1.